We begin with the raw amino-acid sequence, 421 residues long: ATP-dependent RNA helicase RhlB (421 aa).

The short motif at 9 to 37 is the Q motif element; it reads QKFSDFALHPKVVEVLEKKGFHNCTPIQA. The region spanning 40–219 is the Helicase ATP-binding domain; that stretch reads LPLTLAGRDV…FEQMNNAEYI (180 aa). 53–60 contributes to the ATP binding site; it reads AQTGTGKT. The short motif at 165–168 is the DEAD box element; that stretch reads DEAD. The Helicase C-terminal domain occupies 245–390; it reads RLLQTLIEEE…VSKYNPDALM (146 aa). A disordered region spans residues 392–421; it reads DLPKPLRLTRPRTGNGPRRTGAPRNRRRSG. The segment covering 402 to 414 has biased composition (low complexity); sequence PRTGNGPRRTGAP.

The protein belongs to the DEAD box helicase family. RhlB subfamily. As to quaternary structure, component of the RNA degradosome, which is a multiprotein complex involved in RNA processing and mRNA degradation.

The protein localises to the cytoplasm. It catalyses the reaction ATP + H2O = ADP + phosphate + H(+). Its function is as follows. DEAD-box RNA helicase involved in RNA degradation. Has RNA-dependent ATPase activity and unwinds double-stranded RNA. This Shigella boydii serotype 18 (strain CDC 3083-94 / BS512) protein is ATP-dependent RNA helicase RhlB.